A 98-amino-acid chain; its full sequence is Citrate lyase acyl carrier protein (98 aa).

S14 is subject to O-(phosphoribosyl dephospho-coenzyme A)serine.

The protein belongs to the CitD family. As to quaternary structure, oligomer with a subunit composition of (alpha,beta,gamma)6.

Its subcellular location is the cytoplasm. Covalent carrier of the coenzyme of citrate lyase. This chain is Citrate lyase acyl carrier protein, found in Vibrio cholerae serotype O1 (strain ATCC 39541 / Classical Ogawa 395 / O395).